The sequence spans 347 residues: MPAAALLDDFLAFTLAGDAPAEQDGACAGGAVRWQWLGDGLLAFEPAAADAAARASVLVSAGVHGDETAPIELLSMLVRDLAAGALPLACRLLVVLGNVPAMRAGERYLDDDLNRLFSGRHAQVPASREAPRAAQLEAAAAAFFAAAPAGSARWHIDMHTAIRASVFEQFALLPHTGTPPTRAMIEWLGDARIAAVLLHTAKGNTYSHFTAEHCGALACTLELGKVRPFGQNDLARFAPADRAVRKLVSGGRAEVDAGGGHPSLPRVFTVIDQITKQSDALELFVAADVANFTAFARGTVLAQDGDYRYTVTHDEERIVFPNPTVKPGLRAGLLVIDTTRETIAALV.

Zn(2+) is bound by residues His-64, Glu-67, and His-159. Glu-222 is an active-site residue.

This sequence belongs to the AspA/AstE family. Succinylglutamate desuccinylase subfamily. Requires Zn(2+) as cofactor.

The enzyme catalyses N-succinyl-L-glutamate + H2O = L-glutamate + succinate. It functions in the pathway amino-acid degradation; L-arginine degradation via AST pathway; L-glutamate and succinate from L-arginine: step 5/5. In terms of biological role, transforms N(2)-succinylglutamate into succinate and glutamate. The chain is Succinylglutamate desuccinylase from Burkholderia cenocepacia (strain ATCC BAA-245 / DSM 16553 / LMG 16656 / NCTC 13227 / J2315 / CF5610) (Burkholderia cepacia (strain J2315)).